The following is a 300-amino-acid chain: Putative S-adenosyl-L-methionine-dependent methyltransferase MAB_4328c (300 aa).

Residues aspartate 126 and 155 to 156 (DL) each bind S-adenosyl-L-methionine.

Belongs to the UPF0677 family.

Its function is as follows. Exhibits S-adenosyl-L-methionine-dependent methyltransferase activity. The chain is Putative S-adenosyl-L-methionine-dependent methyltransferase MAB_4328c from Mycobacteroides abscessus (strain ATCC 19977 / DSM 44196 / CCUG 20993 / CIP 104536 / JCM 13569 / NCTC 13031 / TMC 1543 / L948) (Mycobacterium abscessus).